The primary structure comprises 280 residues: Dual adapter for phosphotyrosine and 3-phosphotyrosine and 3-phosphoinositide (280 aa).

An SH2 domain is found at 35–129 (WYHGNLTRHA…GTLMVLKHPY (95 aa)). Tyrosine 139 is modified (phosphotyrosine). Serine 141 carries the phosphoserine modification. A PH domain is found at 164–259 (LGTKEGYLTK…WIKILRWKLS (96 aa)).

In terms of assembly, interacts with PtdIns(3,4,5)P3 and PLCG2. Post-translationally, phosphorylated on tyrosine residues.

It is found in the cytoplasm. The protein resides in the membrane. Functionally, may act as a B-cell-associated adapter that regulates B-cell antigen receptor (BCR)-signaling downstream of PI3K. The protein is Dual adapter for phosphotyrosine and 3-phosphotyrosine and 3-phosphoinositide (Dapp1) of Mus musculus (Mouse).